The sequence spans 154 residues: Cysteine-rich DPF motif domain-containing protein 1 (154 aa).

Belongs to the CDPF1 family.

In Drosophila melanogaster (Fruit fly), this protein is Cysteine-rich DPF motif domain-containing protein 1.